The chain runs to 328 residues: ATP-dependent 6-phosphofructokinase (328 aa).

G11 is an ATP binding site. 21 to 25 is a binding site for ADP; that stretch reads RAAVR. Residues 72 to 73 and 102 to 105 each bind ATP; these read RS and GNGT. Mg(2+) is bound at residue N103. 126–128 is a binding site for substrate; sequence TID. D128 serves as the catalytic Proton acceptor. R155 is a binding site for ADP. Substrate contacts are provided by residues R163 and 170 to 172; that span reads MGR. ADP contacts are provided by residues 186-188 and 214-216; these read GAE and KAS. Residues E223, R247, and 253–256 each bind substrate; that span reads HVQR.

Belongs to the phosphofructokinase type A (PFKA) family. ATP-dependent PFK group I subfamily. Prokaryotic clade 'B1' sub-subfamily. In terms of assembly, homotetramer. Requires Mg(2+) as cofactor.

The protein resides in the cytoplasm. The enzyme catalyses beta-D-fructose 6-phosphate + ATP = beta-D-fructose 1,6-bisphosphate + ADP + H(+). Its pathway is carbohydrate degradation; glycolysis; D-glyceraldehyde 3-phosphate and glycerone phosphate from D-glucose: step 3/4. Its activity is regulated as follows. Allosterically activated by ADP and other diphosphonucleosides, and allosterically inhibited by phosphoenolpyruvate. Functionally, catalyzes the phosphorylation of D-fructose 6-phosphate to fructose 1,6-bisphosphate by ATP, the first committing step of glycolysis. The polypeptide is ATP-dependent 6-phosphofructokinase (Cytophaga hutchinsonii (strain ATCC 33406 / DSM 1761 / CIP 103989 / NBRC 15051 / NCIMB 9469 / D465)).